Reading from the N-terminus, the 104-residue chain is Cell cycle protein GpsB (104 aa).

A coiled-coil region spans residues 34–72 (LDVVIQDYEVFQKKIERLEQEIHQLRTEAKRAASERQTR). Residues 60 to 71 (TEAKRAASERQT) show a composition bias toward basic and acidic residues. Positions 60-82 (TEAKRAASERQTRHQTSPSVGST) are disordered. Positions 73–82 (HQTSPSVGST) are enriched in polar residues.

The protein belongs to the GpsB family. In terms of assembly, forms polymers through the coiled coil domains. Interacts with PBP1, MreC and EzrA.

It localises to the cytoplasm. In terms of biological role, divisome component that associates with the complex late in its assembly, after the Z-ring is formed, and is dependent on DivIC and PBP2B for its recruitment to the divisome. Together with EzrA, is a key component of the system that regulates PBP1 localization during cell cycle progression. Its main role could be the removal of PBP1 from the cell pole after pole maturation is completed. Also contributes to the recruitment of PBP1 to the division complex. Not essential for septum formation. The protein is Cell cycle protein GpsB of Halalkalibacterium halodurans (strain ATCC BAA-125 / DSM 18197 / FERM 7344 / JCM 9153 / C-125) (Bacillus halodurans).